Reading from the N-terminus, the 213-residue chain is Protein-L-isoaspartate O-methyltransferase (213 aa).

Residue serine 58 is part of the active site.

It belongs to the methyltransferase superfamily. L-isoaspartyl/D-aspartyl protein methyltransferase family.

It localises to the cytoplasm. It catalyses the reaction [protein]-L-isoaspartate + S-adenosyl-L-methionine = [protein]-L-isoaspartate alpha-methyl ester + S-adenosyl-L-homocysteine. In terms of biological role, catalyzes the methyl esterification of L-isoaspartyl residues in peptides and proteins that result from spontaneous decomposition of normal L-aspartyl and L-asparaginyl residues. It plays a role in the repair and/or degradation of damaged proteins. The polypeptide is Protein-L-isoaspartate O-methyltransferase (Chlorobaculum tepidum (strain ATCC 49652 / DSM 12025 / NBRC 103806 / TLS) (Chlorobium tepidum)).